The chain runs to 85 residues: Small ribosomal subunit protein uS17 (85 aa).

Belongs to the universal ribosomal protein uS17 family. As to quaternary structure, part of the 30S ribosomal subunit.

Its function is as follows. One of the primary rRNA binding proteins, it binds specifically to the 5'-end of 16S ribosomal RNA. In Mycoplasma genitalium (strain ATCC 33530 / DSM 19775 / NCTC 10195 / G37) (Mycoplasmoides genitalium), this protein is Small ribosomal subunit protein uS17.